Reading from the N-terminus, the 249-residue chain is Electron transfer flavoprotein subunit beta (249 aa).

It belongs to the ETF beta-subunit/FixA family. Heterodimer of an alpha and a beta subunit. The cofactor is FAD. Requires AMP as cofactor.

Its function is as follows. The electron transfer flavoprotein serves as a specific electron acceptor for other dehydrogenases. It transfers the electrons to the main respiratory chain via ETF-ubiquinone oxidoreductase (ETF dehydrogenase). In Pseudomonas aeruginosa (strain ATCC 15692 / DSM 22644 / CIP 104116 / JCM 14847 / LMG 12228 / 1C / PRS 101 / PAO1), this protein is Electron transfer flavoprotein subunit beta (etfB).